The primary structure comprises 204 residues: Ribonuclease HII (204 aa).

Residues 17–204 enclose the RNase H type-2 domain; the sequence is TLIAGVDEVG…KPVKKVLGLL (188 aa). Residues aspartate 23, glutamate 24, and aspartate 115 each coordinate a divalent metal cation.

Belongs to the RNase HII family. It depends on Mn(2+) as a cofactor. Mg(2+) serves as cofactor.

It localises to the cytoplasm. The enzyme catalyses Endonucleolytic cleavage to 5'-phosphomonoester.. Endonuclease that specifically degrades the RNA of RNA-DNA hybrids. The polypeptide is Ribonuclease HII (Psychromonas ingrahamii (strain DSM 17664 / CCUG 51855 / 37)).